Here is a 462-residue protein sequence, read N- to C-terminus: BBSome complex member bbs-4 (462 aa).

The tract at residues 1–46 is disordered; sequence MEASNQDEIIGTDVIPNEQDNPEEVVPEPTSLDVPPPPPERAPSAP. TPR repeat units lie at residues 89-122, 124-156, 199-232, 234-266, 268-300, 335-368, and 369-402; these read EAAF…SGKN, RYFY…MKDN, ATLI…QPDN, EVMN…DPAN, QAIL…SDYN, YKIS…YPQN, and AKAV…KKNP.

The protein belongs to the BBS4 family. In terms of assembly, part of BBSome complex, that contains at least bbs-1, bbs-2, bbs-4, bbs-5, osm-12, bbs-8/ttc-8 and bbs-9. Interacts (via C-terminus) with bbs-5; the interaction is direct.

The protein localises to the cytoplasm. It localises to the cytoskeleton. The protein resides in the microtubule organizing center. Its subcellular location is the centrosome. It is found in the cell projection. The protein localises to the cilium membrane. Functionally, component of the BBSome complex. The BBSome complex is thought to function as a coat complex required for sorting of specific membrane proteins to the primary cilia. The BBSome complex is required for ciliogenesis but is dispensable for centriolar satellite function. Required for proper BBSome complex assembly and its ciliary localization. May be required for microtubule anchoring at the centrosome but not for microtubule nucleation. May be required for the dynein-mediated transport of pericentriolar proteins to the centrosome. Required, redundantly with bbs-5, for cilia biogenesis and both the assembly and movement of intraflagellar transport proteins along the ciliary axoneme. Plays a role in the removal of degraded mechanosensory receptors within the cilia. This chain is BBSome complex member bbs-4, found in Caenorhabditis elegans.